A 216-amino-acid polypeptide reads, in one-letter code: Uracil phosphoribosyltransferase (216 aa).

Residues arginine 85, arginine 110, and 135–143 (DPMVATGYS) each bind 5-phospho-alpha-D-ribose 1-diphosphate. Uracil contacts are provided by residues isoleucine 200 and 205-207 (GDA). Aspartate 206 is a 5-phospho-alpha-D-ribose 1-diphosphate binding site.

The protein belongs to the UPRTase family. Mg(2+) is required as a cofactor.

The enzyme catalyses UMP + diphosphate = 5-phospho-alpha-D-ribose 1-diphosphate + uracil. It participates in pyrimidine metabolism; UMP biosynthesis via salvage pathway; UMP from uracil: step 1/1. Its activity is regulated as follows. Allosterically activated by GTP. Catalyzes the conversion of uracil and 5-phospho-alpha-D-ribose 1-diphosphate (PRPP) to UMP and diphosphate. The sequence is that of Uracil phosphoribosyltransferase from Burkholderia ambifaria (strain ATCC BAA-244 / DSM 16087 / CCUG 44356 / LMG 19182 / AMMD) (Burkholderia cepacia (strain AMMD)).